Here is a 373-residue protein sequence, read N- to C-terminus: 4-hydroxy-3-methylbut-2-en-1-yl diphosphate synthase (flavodoxin) (373 aa).

The [4Fe-4S] cluster site is built by C270, C273, C305, and E312.

Belongs to the IspG family. [4Fe-4S] cluster serves as cofactor.

It carries out the reaction (2E)-4-hydroxy-3-methylbut-2-enyl diphosphate + oxidized [flavodoxin] + H2O + 2 H(+) = 2-C-methyl-D-erythritol 2,4-cyclic diphosphate + reduced [flavodoxin]. It participates in isoprenoid biosynthesis; isopentenyl diphosphate biosynthesis via DXP pathway; isopentenyl diphosphate from 1-deoxy-D-xylulose 5-phosphate: step 5/6. In terms of biological role, converts 2C-methyl-D-erythritol 2,4-cyclodiphosphate (ME-2,4cPP) into 1-hydroxy-2-methyl-2-(E)-butenyl 4-diphosphate. The polypeptide is 4-hydroxy-3-methylbut-2-en-1-yl diphosphate synthase (flavodoxin) (Photorhabdus laumondii subsp. laumondii (strain DSM 15139 / CIP 105565 / TT01) (Photorhabdus luminescens subsp. laumondii)).